An 89-amino-acid polypeptide reads, in one-letter code: Small ribosomal subunit protein uS15 (89 aa).

This sequence belongs to the universal ribosomal protein uS15 family. In terms of assembly, part of the 30S ribosomal subunit. Forms a bridge to the 50S subunit in the 70S ribosome, contacting the 23S rRNA.

Functionally, one of the primary rRNA binding proteins, it binds directly to 16S rRNA where it helps nucleate assembly of the platform of the 30S subunit by binding and bridging several RNA helices of the 16S rRNA. Forms an intersubunit bridge (bridge B4) with the 23S rRNA of the 50S subunit in the ribosome. The polypeptide is Small ribosomal subunit protein uS15 (Shewanella baltica (strain OS185)).